The chain runs to 87 residues: Large ribosomal subunit protein bL31B (87 aa).

The protein belongs to the bacterial ribosomal protein bL31 family. Type B subfamily. As to quaternary structure, part of the 50S ribosomal subunit.

The chain is Large ribosomal subunit protein bL31B from Klebsiella pneumoniae (strain 342).